Consider the following 397-residue polypeptide: F-box protein At3g49450 (397 aa).

Residues 26 to 75 (GENSGTLPTDLMVEILSRVPAKSAARFRCVSNDWNSLLRSPYLTNLFLKR) form the F-box domain.

This Arabidopsis thaliana (Mouse-ear cress) protein is F-box protein At3g49450.